Reading from the N-terminus, the 150-residue chain is D-aminoacyl-tRNA deacylase (150 aa).

Residues 133–134 (GP) carry the Gly-cisPro motif, important for rejection of L-amino acids motif.

The protein belongs to the DTD family. In terms of assembly, homodimer.

Its subcellular location is the cytoplasm. It catalyses the reaction glycyl-tRNA(Ala) + H2O = tRNA(Ala) + glycine + H(+). It carries out the reaction a D-aminoacyl-tRNA + H2O = a tRNA + a D-alpha-amino acid + H(+). Its function is as follows. An aminoacyl-tRNA editing enzyme that deacylates mischarged D-aminoacyl-tRNAs. Also deacylates mischarged glycyl-tRNA(Ala), protecting cells against glycine mischarging by AlaRS. Acts via tRNA-based rather than protein-based catalysis; rejects L-amino acids rather than detecting D-amino acids in the active site. By recycling D-aminoacyl-tRNA to D-amino acids and free tRNA molecules, this enzyme counteracts the toxicity associated with the formation of D-aminoacyl-tRNA entities in vivo and helps enforce protein L-homochirality. The protein is D-aminoacyl-tRNA deacylase of Micrococcus luteus (strain ATCC 4698 / DSM 20030 / JCM 1464 / CCM 169 / CCUG 5858 / IAM 1056 / NBRC 3333 / NCIMB 9278 / NCTC 2665 / VKM Ac-2230) (Micrococcus lysodeikticus).